The primary structure comprises 238 residues: Ribosomal RNA small subunit methyltransferase G (238 aa).

Residues glycine 77, phenylalanine 82, 128-129 (AE), and arginine 147 contribute to the S-adenosyl-L-methionine site.

Belongs to the methyltransferase superfamily. RNA methyltransferase RsmG family.

The protein localises to the cytoplasm. Specifically methylates the N7 position of guanine in position 535 of 16S rRNA. The chain is Ribosomal RNA small subunit methyltransferase G from Exiguobacterium sp. (strain ATCC BAA-1283 / AT1b).